We begin with the raw amino-acid sequence, 989 residues long: Voltage-gated delayed rectifier potassium channel KCNH1 (989 aa).

Residues 1–220 are Cytoplasmic-facing; sequence MTMAGGRRGL…LHYCVFKTTW (220 aa). A PAS domain is found at 14–94; the sequence is QNTFLENIVR…QTFENYEMNS (81 aa). The PAC domain occupies 93-145; it reads NSFEILMYKKNRTPVWFFVKIAPIRNEQDKVVLFLCTFSDITAFKQPIEDDSC. A required for phosphatidylinositol bisphosphate binding region spans residues 151–162; it reads FARLTRALTSSR. A helical membrane pass occupies residues 221-241; sequence DWIILILTFYTAILVPYNVSF. The Extracellular portion of the chain corresponds to 242–248; sequence KTRQNNV. Residues 249 to 269 traverse the membrane as a helical segment; it reads AWLVVDSIVDVIFLVDIVLNF. Topologically, residues 270 to 290 are cytoplasmic; it reads HTTFVGPAGEVISDPKLIRMN. The chain crosses the membrane as a helical span at residues 291 to 309; it reads YLKTWFVIDLLSCLPYDVI. Residues 310–345 lie on the Extracellular side of the membrane; that stretch reads NAFENVDEVSAFMGDPGKIGFADQIPPPLEGRESQG. The helical; Voltage-sensor transmembrane segment at 346 to 368 threads the bilayer; the sequence is ISSLFSSLKVVRLLRLGRVARKL. Topologically, residues 369-377 are cytoplasmic; that stretch reads DHYIEYGAA. The helical transmembrane segment at 378–399 threads the bilayer; that stretch reads VLVLLVCVFGLAAHWMACIWYS. The Extracellular segment spans residues 400–448; it reads IGDYEIFDEDTKTIRNNSWLYQLALDIGTPYQFNGSGSGKWEGGPSKNS. 2 N-linked (GlcNAc...) asparagine glycosylation sites follow: Asn-415 and Asn-433. The pore-forming intramembrane region spans 449 to 470; sequence VYISSLYFTMTSLTSVGFGNIA. The short motif at 463–468 is the Selectivity filter element; that stretch reads SVGFGN. The Extracellular portion of the chain corresponds to 471-477; sequence PSTDIEK. The helical transmembrane segment at 478-498 threads the bilayer; that stretch reads IFAVAIMMIGSLLYATIFGNV. The Cytoplasmic segment spans residues 499–989; that stretch reads TTIFQQMYAN…ESDRDIFGAS (491 aa). Residues 673–770 form a calmodulin-binding region; it reads KRDALQKVLE…LDDLDVEKGN (98 aa). Positions 699–701 are interaction with cyclic nucleotide-binding pocket; the sequence is YNL. Basic and acidic residues-rich tracts occupy residues 857–879 and 887–901; these read ESME…KTDS and SDLR…RSPQ. Disordered stretches follow at residues 857 to 905 and 961 to 989; these read ESME…DRSP and RGSA…FGAS. Residues 924–964 are CAD (involved in subunit assembly); sequence ATVLEVKYELKEDIKALNAKMTSIEKQLSEILRILMSRGSA. The segment covering 962-979 has biased composition (polar residues); sequence GSAQSPQETGEISRPQSP. A phosphoserine mark is found at Ser-974, Ser-978, and Ser-981. Over residues 980–989 the composition is skewed to basic and acidic residues; the sequence is ESDRDIFGAS.

The protein belongs to the potassium channel family. H (Eag) (TC 1.A.1.20) subfamily. Kv10.1/KCNH1 sub-subfamily. As to quaternary structure, homomultimer. The potassium channel is composed of a homo- or heterotetrameric complex of pore-forming alpha subunits that can associate with modulating beta subunits. Heteromultimer with KCNH5/EAG2. Interacts with ALG10B. Interacts with RABEP1. Interacts (via C-terminus) with CTTN. Interacts (via C-terminal cytoplasmic region) with Ca(2+)-bound calmodulin. Channel activity is regulated via tyrosine phosphorylation/dephosphorylation by SRC and PTPN6. In terms of tissue distribution, detected in brain (at protein level). Highly expressed in olfactory bulb. Detected in brain cortex, hippocampus, brain stem, striatum, thalamus, hypothalamus and spinal cord.

The protein resides in the cell membrane. It localises to the nucleus inner membrane. The protein localises to the cell projection. Its subcellular location is the dendrite. It is found in the axon. The protein resides in the presynaptic cell membrane. It localises to the perikaryon. The protein localises to the postsynaptic density membrane. Its subcellular location is the early endosome membrane. The catalysed reaction is K(+)(in) = K(+)(out). Its activity is regulated as follows. Channel activity is inhibited by interaction with Ca(2+)-bound calmodulin. Interaction of a single pore-forming alpha subunit with a calmodulin chain is sufficient to promote channel closure. Channel activity is not regulated by cyclic nucleotides. Channel activity is inhibited by binding intracellular phosphatidylinositol-3,5-bisphosphate and phosphatidylinositol-4,5-bisphosphate (PIP2), but is not inhibited by phosphatidylinositol 4-phosphate. Functionally, pore-forming (alpha) subunit of a voltage-gated delayed rectifier potassium channel that mediates outward-rectifying potassium currents which, on depolarization, reaches a steady-state level and do not inactivate. The activation kinetics depend on the prepulse potential and external divalent cation concentration. With negative prepulses, the current activation is delayed and slowed down several fold, whereas more positive prepulses speed up activation. The time course of activation is biphasic with a fast and a slowly activating current component. Activates at more positive membrane potentials and exhibit a steeper activation curve. Channel properties are modulated by subunit assembly. Mediates IK(NI) current in myoblasts. Involved in the regulation of cell proliferation and differentiation, in particular adipogenic and osteogenic differentiation in bone marrow-derived mesenchymal stem cells (MSCs). The polypeptide is Voltage-gated delayed rectifier potassium channel KCNH1 (Mus musculus (Mouse)).